The sequence spans 607 residues: Chaperone protein HtpG (607 aa).

An a; substrate-binding region spans residues 1–323 (MKKEEKIFKA…CDSLSLNISR (323 aa)). The b stretch occupies residues 324 to 534 (EILQQNAELQ…KGGLSLEMEK (211 aa)). Residues 535-607 (TLSEMTNNND…FIKNLNSLIK (73 aa)) form a c region.

It belongs to the heat shock protein 90 family. As to quaternary structure, homodimer.

The protein resides in the cytoplasm. Its function is as follows. Molecular chaperone. Has ATPase activity. The polypeptide is Chaperone protein HtpG (Fusobacterium nucleatum subsp. nucleatum (strain ATCC 25586 / DSM 15643 / BCRC 10681 / CIP 101130 / JCM 8532 / KCTC 2640 / LMG 13131 / VPI 4355)).